A 198-amino-acid polypeptide reads, in one-letter code: Peptidyl-tRNA hydrolase (198 aa).

Tyr-18 provides a ligand contact to tRNA. The active-site Proton acceptor is His-23. Tyr-69, Asn-71, and Asn-117 together coordinate tRNA.

Belongs to the PTH family. Monomer.

The protein localises to the cytoplasm. It catalyses the reaction an N-acyl-L-alpha-aminoacyl-tRNA + H2O = an N-acyl-L-amino acid + a tRNA + H(+). In terms of biological role, hydrolyzes ribosome-free peptidyl-tRNAs (with 1 or more amino acids incorporated), which drop off the ribosome during protein synthesis, or as a result of ribosome stalling. Catalyzes the release of premature peptidyl moieties from peptidyl-tRNA molecules trapped in stalled 50S ribosomal subunits, and thus maintains levels of free tRNAs and 50S ribosomes. The polypeptide is Peptidyl-tRNA hydrolase (Aeromonas hydrophila subsp. hydrophila (strain ATCC 7966 / DSM 30187 / BCRC 13018 / CCUG 14551 / JCM 1027 / KCTC 2358 / NCIMB 9240 / NCTC 8049)).